A 257-amino-acid chain; its full sequence is Probable ABC transporter arginine-binding protein ArtJ (257 aa).

Positions 1-23 (MCIKRKKTWIAFLAVVCSFCLTG) are cleaved as a signal peptide. Residues Asn41, Glu48, Gly100, Ser102, Arg107, and Tyr151 each coordinate L-arginine.

Belongs to the bacterial solute-binding protein 3 family.

Its subcellular location is the secreted. It localises to the cell surface. Probably part of an ABC transporter complex involved in arginine transport. Binds arginine. Interacts with host epithelial cells, suggesting a role in host-cell adhesion during infection. The sequence is that of Probable ABC transporter arginine-binding protein ArtJ from Chlamydia trachomatis serovar D (strain ATCC VR-885 / DSM 19411 / UW-3/Cx).